A 327-amino-acid chain; its full sequence is uncharacterized protein (327 aa).

One can recognise an S4 RNA-binding domain in the interval 12–79; that stretch reads KRIDEFLAKE…LKKELDLEIE (68 aa). D136 is a catalytic residue.

It belongs to the pseudouridine synthase RluA family.

The enzyme catalyses a uridine in RNA = a pseudouridine in RNA. This is an uncharacterized protein from Helicobacter pylori (strain J99 / ATCC 700824) (Campylobacter pylori J99).